The chain runs to 410 residues: Testis-specific Y-encoded-like protein 6 (410 aa).

Disordered stretches follow at residues 1 to 31 (MSLP…EKSK) and 46 to 69 (PIVF…DGGH). A Phosphoserine modification is found at Ser9. A compositionally biased stretch (basic and acidic residues) spans 18–31 (EDPHQGQRSREKSK).

This sequence belongs to the nucleosome assembly protein (NAP) family.

The sequence is that of Testis-specific Y-encoded-like protein 6 (TSPYL6) from Homo sapiens (Human).